Consider the following 197-residue polypeptide: NADH-quinone oxidoreductase subunit C (197 aa).

This sequence belongs to the complex I 30 kDa subunit family. NDH-1 is composed of 14 different subunits. Subunits NuoB, C, D, E, F, and G constitute the peripheral sector of the complex.

The protein localises to the cell inner membrane. The enzyme catalyses a quinone + NADH + 5 H(+)(in) = a quinol + NAD(+) + 4 H(+)(out). NDH-1 shuttles electrons from NADH, via FMN and iron-sulfur (Fe-S) centers, to quinones in the respiratory chain. The immediate electron acceptor for the enzyme in this species is believed to be ubiquinone. Couples the redox reaction to proton translocation (for every two electrons transferred, four hydrogen ions are translocated across the cytoplasmic membrane), and thus conserves the redox energy in a proton gradient. The polypeptide is NADH-quinone oxidoreductase subunit C (Neisseria meningitidis serogroup A / serotype 4A (strain DSM 15465 / Z2491)).